The chain runs to 176 residues: 3-hydroxydecanoyl-[acyl-carrier-protein] dehydratase (176 aa).

Residue His71 is part of the active site.

Belongs to the thioester dehydratase family. FabA subfamily. As to quaternary structure, homodimer.

Its subcellular location is the cytoplasm. The catalysed reaction is a (3R)-hydroxyacyl-[ACP] = a (2E)-enoyl-[ACP] + H2O. It carries out the reaction (3R)-hydroxydecanoyl-[ACP] = (2E)-decenoyl-[ACP] + H2O. The enzyme catalyses (2E)-decenoyl-[ACP] = (3Z)-decenoyl-[ACP]. The protein operates within lipid metabolism; fatty acid biosynthesis. In terms of biological role, necessary for the introduction of cis unsaturation into fatty acids. Catalyzes the dehydration of (3R)-3-hydroxydecanoyl-ACP to E-(2)-decenoyl-ACP and then its isomerization to Z-(3)-decenoyl-ACP. Can catalyze the dehydratase reaction for beta-hydroxyacyl-ACPs with saturated chain lengths up to 16:0, being most active on intermediate chain length. This Rhodopseudomonas palustris (strain HaA2) protein is 3-hydroxydecanoyl-[acyl-carrier-protein] dehydratase.